The primary structure comprises 350 residues: DNA repair protein RAD51 homolog 2 (350 aa).

Residues 1-75 (MSSKKLRRVG…TAYELKTRRS (75 aa)) form an interaction with RAD51C region. An ATP-binding site is contributed by 108–115 (GPPGCGKT).

The protein belongs to the RecA family. RAD51 subfamily. As to quaternary structure, part of the BCDX2 complex consisting of RAD51B, RAD51C, RAD51D and XRCC2; the complex has a ring-like structure arranged into a flat disc around a central channel. The BCDX2 subcomplex RAD51B:RAD51C interacts with RAD51. Interacts with SWSAP1; involved in homologous recombination repair. Interacts with HELQ. Phosphorylated on tyrosine residues by BCR-ABL. Expressed in a wide range of tissues.

The protein localises to the nucleus. Involved in the homologous recombination repair (HRR) pathway of double-stranded DNA breaks arising during DNA replication or induced by DNA-damaging agents. May promote the assembly of presynaptic RAD51 nucleoprotein filaments. Binds single-stranded DNA and double-stranded DNA and has DNA-dependent ATPase activity. Part of the RAD51 paralog protein complex BCDX2 which acts in the BRCA1-BRCA2-dependent HR pathway. Upon DNA damage, BCDX2 acts downstream of BRCA2 recruitment and upstream of RAD51 recruitment. BCDX2 binds predominantly to the intersection of the four duplex arms of the Holliday junction and to junction of replication forks. The BCDX2 complex was originally reported to bind single-stranded DNA, single-stranded gaps in duplex DNA and specifically to nicks in duplex DNA. The BCDX2 subcomplex RAD51B:RAD51C exhibits single-stranded DNA-dependent ATPase activity suggesting an involvement in early stages of the HR pathway. The polypeptide is DNA repair protein RAD51 homolog 2 (Rad51b) (Mus musculus (Mouse)).